Reading from the N-terminus, the 64-residue chain is Myotoxin-2 (64 aa).

The signal sequence occupies residues 1 to 21 (KILYLLFAFLFLAFLSEPGNA). Cys-32 and Cys-51 are oxidised to a cystine.

It belongs to the crotamine-myotoxin family. Monomer. In terms of tissue distribution, expressed by the venom gland.

It localises to the secreted. Cationic peptide that possesses multiple functions. It acts as a cell-penetrating peptide (CPP), and as a potent voltage-gated potassium channel (Kv) inhibitor. It exhibits antimicrobial activities, hind limb paralysis, and severe muscle necrosis by a non-enzymatic mechanism. This is Myotoxin-2 from Crotalus durissus terrificus (South American rattlesnake).